Consider the following 252-residue polypeptide: Phosphate import ATP-binding protein PstB (252 aa).

An ABC transporter domain is found at 5–247 (VKIDKLNVHF…PEKKQTEDYI (243 aa)). 37 to 44 (GPSGCGKS) serves as a coordination point for ATP.

It belongs to the ABC transporter superfamily. Phosphate importer (TC 3.A.1.7) family. As to quaternary structure, the complex is composed of two ATP-binding proteins (PstB), two transmembrane proteins (PstC and PstA) and a solute-binding protein (PstS).

It is found in the cell inner membrane. The catalysed reaction is phosphate(out) + ATP + H2O = ADP + 2 phosphate(in) + H(+). Functionally, part of the ABC transporter complex PstSACB involved in phosphate import. Responsible for energy coupling to the transport system. The protein is Phosphate import ATP-binding protein PstB of Geobacter metallireducens (strain ATCC 53774 / DSM 7210 / GS-15).